Reading from the N-terminus, the 85-residue chain is UPF0386 protein MXAN_1729 (85 aa).

This sequence belongs to the UPF0386 family.

The protein is UPF0386 protein MXAN_1729 of Myxococcus xanthus (strain DK1622).